Reading from the N-terminus, the 1081-residue chain is DNA polymerase catalytic subunit (1081 aa).

Belongs to the DNA polymerase type-B family. Forms a complex with the ssDNA-binding protein UL29, the DNA polymerase processivity factor, and the alkaline exonuclease. Interacts with the putative helicase-primase complex subunit UL8; this interaction may coordinate leading and lagging strand DNA synthesis at the replication fork.

The protein localises to the host nucleus. The catalysed reaction is DNA(n) + a 2'-deoxyribonucleoside 5'-triphosphate = DNA(n+1) + diphosphate. It catalyses the reaction Endonucleolytic cleavage to 5'-phosphomonoester.. Replicates viral genomic DNA. The replication complex is composed of six viral proteins: the DNA polymerase, processivity factor, primase, primase-associated factor, helicase, and ssDNA-binding protein. Additionally, the polymerase contains an intrinsic ribonuclease H (RNase H) activity that specifically degrades RNA/DNA heteroduplexes or duplex DNA substrates in the 5' to 3' direction. Therefore, it can catalyze the excision of the RNA primers that initiate the synthesis of Okazaki fragments at a replication fork during viral DNA replication. This Psittacid herpesvirus 1 (isolate Amazon parrot/-/97-0001/1997) (PsHV-1) protein is DNA polymerase catalytic subunit (UL30).